A 283-amino-acid polypeptide reads, in one-letter code: Elongation factor Ts (283 aa).

The interval 80-83 is involved in Mg(2+) ion dislocation from EF-Tu; the sequence is TDFV.

This sequence belongs to the EF-Ts family.

It is found in the cytoplasm. Associates with the EF-Tu.GDP complex and induces the exchange of GDP to GTP. It remains bound to the aminoacyl-tRNA.EF-Tu.GTP complex up to the GTP hydrolysis stage on the ribosome. The polypeptide is Elongation factor Ts (Enterobacter sp. (strain 638)).